We begin with the raw amino-acid sequence, 708 residues long: RUN and FYVE domain-containing protein 1 (708 aa).

Over residues 1–17 (MADREGGCAAGRGRELE) the composition is skewed to basic and acidic residues. The segment at 1–57 (MADREGGCAAGRGRELEPELEPGPGPGSALEPGEEFEIVDRSQLPGPGDLRSATRPR) is disordered. An RUN domain is found at 139 to 271 (DADHAPLQQF…LDANLCLKGE (133 aa)). Residues 321-374 (TVGDLQTKIDGLEKTNSKLQEELSAATDRICSLQEEQQQLREQNELIRERSEKS) adopt a coiled-coil conformation. 2 positions are modified to phosphotyrosine: Y389 and Y400. Residues 405–617 (KQLKEEKKVR…QALQEMGLHL (213 aa)) adopt a coiled-coil conformation. The interval 493–522 (QVMSSMKQMEERLQHSERARQGAEERSHKL) is disordered. Residues 500–522 (QMEERLQHSERARQGAEERSHKL) are compositionally biased toward basic and acidic residues. Residues 615-625 (LHLSQSKLKME) form an interaction with RAB4 region. S620 carries the post-translational modification Phosphoserine. Residues 642–700 (DDEATHCRQCEKEFSISRRKHHCRNCGHIFCNTCSSNELALPSYPKPVRVCDSCHTLLL) form an FYVE-type zinc finger. C648, C651, C664, C667, C672, C675, C692, and C695 together coordinate Zn(2+).

Self-assembles through coiled coil domains to drive ELVA (endo-lysosomal vesicular assembly) formation. Interacts with BMX. May interact with SSB. Interacts with RAB4 and RAB5 that have been activated by GTP-binding. Interacts WITH RAB14 and RAB4B (GTP-bound form); the interactions allow endosomal tethering and fusion. Interacts with ARL8B (GTP-bound form); the interaction is required for RUFY1 endosomal location and promotes interaction with RAB14. Post-translationally, phosphorylation on Tyr-389 and/or Tyr-400 is required for interaction with BMX and endosomal targeting. As to expression, broadly expressed, with highest levels in lung, testis, kidney and brain.

The protein resides in the early endosome membrane. Its function is as follows. Activating adapter involved in cargo sorting from early/recycling endosomes. Regulates retrieval of proteins from endosomes to the trans-Golgi network through interaction with the dynein-dynactin complex. Dual effector of RAB4B and RAB14, mediates a cooperative interaction allowing endosomal tethering and fusion. Binds phospholipid vesicles containing phosphatidylinositol 3-phosphate and participates in early endosomal trafficking. In oocytes, self-assembles to form a protein matrix which hold together endolysosomes, autophagosomes and proteasomes and generate non-membrane-bound compartments called endo-lysosomal vesicular assemblies (ELVAs). In immature oocytes, ELVAs sequester ubiquitinated protein aggregates and degrade them upon oocyte maturation. The chain is RUN and FYVE domain-containing protein 1 from Homo sapiens (Human).